The sequence spans 139 residues: Nucleoside diphosphate kinase (139 aa).

ATP is bound by residues K10, F58, R86, T92, R103, and N113. H116 acts as the Pros-phosphohistidine intermediate in catalysis.

The protein belongs to the NDK family. In terms of assembly, homotetramer. Requires Mg(2+) as cofactor.

The protein localises to the cytoplasm. It catalyses the reaction a 2'-deoxyribonucleoside 5'-diphosphate + ATP = a 2'-deoxyribonucleoside 5'-triphosphate + ADP. The enzyme catalyses a ribonucleoside 5'-diphosphate + ATP = a ribonucleoside 5'-triphosphate + ADP. In terms of biological role, major role in the synthesis of nucleoside triphosphates other than ATP. The ATP gamma phosphate is transferred to the NDP beta phosphate via a ping-pong mechanism, using a phosphorylated active-site intermediate. This chain is Nucleoside diphosphate kinase, found in Caulobacter sp. (strain K31).